We begin with the raw amino-acid sequence, 1026 residues long: Multidrug resistance protein MdtC (1026 aa).

11 helical membrane-spanning segments follow: residues 15–35, 333–353, 360–380, 387–407, 431–451, 463–483, 528–548, 853–873, 897–917, 953–973, and 984–1004; these read ILIAAAITLCGILGFRLLPVA, EVEETLAISVALVILVVFLFL, LIPAVAVPVSLIGTFAAMYLC, LSLMALTIATGFVVDDAIVVL, VGFTVISMSLSLVAVFLPLLL, FAVTLSVAIGISLVVSLTLTP, LVGVVFLGTVALNIWLYIAIP, LILIVAAIATVYIVLGILYES, LFNAPFSLIALIGIMLLIGIV, PIMMTTLAALFGALPLVLSDG, and ITIVGGLVMSQLLTLYTTPVV.

Belongs to the resistance-nodulation-cell division (RND) (TC 2.A.6) family. MdtC subfamily. Part of a tripartite efflux system composed of MdtA, MdtB and MdtC. MdtC forms a heteromultimer with MdtB.

The protein localises to the cell inner membrane. In Salmonella heidelberg (strain SL476), this protein is Multidrug resistance protein MdtC.